Reading from the N-terminus, the 991-residue chain is Valine--tRNA ligase (991 aa).

Positions Pro-43 to His-53 match the 'HIGH' region motif. A 'KMSKS' region motif is present at residues Lys-582 to Ser-586. Lys-585 is an ATP binding site. Residues Ala-689–Arg-711 form a disordered region. The span at Ala-693–Ala-704 shows a compositional bias: low complexity. Positions Leu-925 to Arg-988 form a coiled coil.

It belongs to the class-I aminoacyl-tRNA synthetase family. ValS type 1 subfamily. In terms of assembly, monomer.

It localises to the cytoplasm. It catalyses the reaction tRNA(Val) + L-valine + ATP = L-valyl-tRNA(Val) + AMP + diphosphate. Its function is as follows. Catalyzes the attachment of valine to tRNA(Val). As ValRS can inadvertently accommodate and process structurally similar amino acids such as threonine, to avoid such errors, it has a 'posttransfer' editing activity that hydrolyzes mischarged Thr-tRNA(Val) in a tRNA-dependent manner. The polypeptide is Valine--tRNA ligase (Xylella fastidiosa (strain M12)).